The chain runs to 412 residues: Putative odorant receptor 85d (412 aa).

The Cytoplasmic portion of the chain corresponds to 1–56 (MLTKKDTQSAKEQEKLKAIPLHSFLKYANVFYLSIGMMAYDHKYSQKWKEVLLHWT). Residues 57 to 77 (FIAQMVNLNTVLISELIYVFL) traverse the membrane as a helical segment. Residues 78–84 (AIGKGSN) are Extracellular-facing. Residues 85 to 105 (FLEATMNLSFIGFVIVGDFKI) traverse the membrane as a helical segment. Over 106-152 (WNISRQRKRLTQVVSRLEELHPQGLAQQEPYNIGHHLSGYSRYSKFY) the chain is Cytoplasmic. The chain crosses the membrane as a helical span at residues 153 to 173 (FGMHMVLIWTYNLYWAVYYLV). At 174 to 219 (CDFWLGMRQFERMLPYYCWVPWDWSTGYSYYFMYISQNIGGQACLS) the chain is on the extracellular side. The helical transmembrane segment at 220-240 (GQLAADMLMCALVTLVVMHFI) threads the bilayer. Residues 241-282 (RLSAHIESHVAGIGSFQHDLEFLQATVAYHQSLIHLCQDINE) lie on the Cytoplasmic side of the membrane. The helical transmembrane segment at 283–303 (IFGVSLLSNFVSSSFIICFVG) threads the bilayer. Over 304-314 (FQMTIGSKIDN) the chain is Extracellular. The helical transmembrane segment at 315–335 (LVMLVLFLFCAMVQVFMIATH) threads the bilayer. Residues 336–382 (AQRLVDASEQIGQAVYNHDWFRADLRYRKMLILIIKRAQQPSRLKAT) lie on the Cytoplasmic side of the membrane. The chain crosses the membrane as a helical span at residues 383 to 403 (MFLNISLVTVSDLLQLSYKFF). At 404 to 412 (ALLRTMYVN) the chain is on the extracellular side.

It belongs to the insect chemoreceptor superfamily. Heteromeric odorant receptor channel (TC 1.A.69) family. Or49a subfamily. In terms of assembly, interacts with Orco. Complexes exist early in the endomembrane system in olfactory sensory neurons (OSNs), coupling these complexes to the conserved ciliary trafficking pathway. As to expression, expressed in olfactory sensory neurons in the maxillary palp.

It localises to the cell membrane. Its function is as follows. Odorant receptor which mediates acceptance or avoidance behavior, depending on its substrates. The odorant receptor repertoire encodes a large collection of odor stimuli that vary widely in identity, intensity, and duration. May form a complex with Orco to form odorant-sensing units, providing sensitive and prolonged odorant signaling and calcium permeability. This is Putative odorant receptor 85d (Or85d) from Drosophila melanogaster (Fruit fly).